The sequence spans 716 residues: Tensin-4 (716 aa).

Positions 1-17 (MSQVMSSPLLAGGPAVG) are cleaved as a signal peptide. 4 disordered regions span residues 119-274 (LPPG…VSML), 301-322 (QSSS…NLGP), 334-366 (VPSN…PSIT), and 379-436 (GFPE…RDMQ). The span at 138–150 (KKKEEPEALDIKY) shows a compositional bias: basic and acidic residues. A compositionally biased stretch (polar residues) spans 197–206 (SSESLIFSGS). Residues 214–228 (PAPPSAVPSSHPPTS) show a composition bias toward pro residues. Residue serine 248 is modified to Phosphoserine. Residues 265–274 (PQLSSRVSML) show a composition bias toward polar residues. Over residues 402–419 (ATSSSMPCPATRSHSQTL) the composition is skewed to polar residues. The 108-residue stretch at 449 to 556 (WFKPSISREQ…ALPCKLVIPQ (108 aa)) folds into the SH2 domain. The 122-residue stretch at 583–704 (CHALYLSSVS…TLQPASQVIR (122 aa)) folds into the PTB domain.

It belongs to the PTEN phosphatase protein family. In terms of assembly, interacts (via SH2 domain) with Rho GTPase-activating protein DLC1 (via C-terminus); the interaction is independent of DLC1 tyrosine phosphorylation. Interacts with integrin ITGB1; the interaction displaces tensin TNS3 from the ITGB1 cytoplasmic tail and promotes ITGB1 stability. Interacts (via SH2 domain) with E3 ubiquitin-protein ligase CBL (phosphorylated on 'Tyr-782'); the interaction is enhanced in the presence of EGF and reduces interaction of CBL with EGFR. Interacts (via SH2 domain) with receptor tyrosine kinase MET (when phosphorylated); the interaction increases MET protein stability.

Its subcellular location is the cell junction. The protein resides in the focal adhesion. It localises to the cytoplasm. The protein localises to the cytoskeleton. Its function is as follows. Promotes EGF-induced cell migration by displacing tensin TNS3 from the cytoplasmic tail of integrin ITGB1 which results in dissociation of TNS3 from focal adhesions, disassembly of actin stress fibers and initiation of cell migration. Suppresses ligand-induced degradation of EGFR by reducing EGFR ubiquitination in the presence of EGF. Increases MET protein stability by inhibiting MET endocytosis and subsequent lysosomal degradation which leads to increased cell survival, proliferation and migration. The protein is Tensin-4 (TNS4) of Bos taurus (Bovine).